The primary structure comprises 583 residues: ATP-dependent lipid A-core flippase (583 aa).

6 helical membrane passes run 32-52 (VAFLISIIALVTFSATNTGFL), 71-91 (LHLLPFMLFGLLAIRALAGFI), 115-135 (LMSLPVSFFDAVSAGVVTSKL), 160-180 (ILGMVGYMLYLDWQLTLIFAV), 259-279 (SMVVELLAGVALALVVFYAVG), and 286-306 (FAAFIGALLMLIGPVKTLTSL). The 279-residue stretch at 34–312 (FLISIIALVT…LTSLNEELQV (279 aa)) folds into the ABC transmembrane type-1 domain. Positions 344-580 (IVFENVTLQY…DGHYAKLYRK (237 aa)) constitute an ABC transporter domain. An ATP-binding site is contributed by 378 to 385 (GRSGGGKT).

This sequence belongs to the ABC transporter superfamily. Lipid exporter (TC 3.A.1.106) family. As to quaternary structure, homodimer.

It is found in the cell inner membrane. It catalyses the reaction ATP + H2O + lipid A-core oligosaccharideSide 1 = ADP + phosphate + lipid A-core oligosaccharideSide 2.. Involved in lipopolysaccharide (LPS) biosynthesis. Translocates lipid A-core from the inner to the outer leaflet of the inner membrane. Transmembrane domains (TMD) form a pore in the inner membrane and the ATP-binding domain (NBD) is responsible for energy generation. The polypeptide is ATP-dependent lipid A-core flippase (Methylobacillus flagellatus (strain ATCC 51484 / DSM 6875 / VKM B-1610 / KT)).